A 403-amino-acid polypeptide reads, in one-letter code: Soluble calcium-activated nucleotidase 1 (403 aa).

The Cytoplasmic portion of the chain corresponds to 1 to 44; the sequence is MPIQPFDQREWNEPMHSLRISVGGLPVLASMTKATDPRFRPRWR. A helical; Signal-anchor for type II membrane protein membrane pass occupies residues 45-61; the sequence is VILTSFVGAALLWLLYS. At 62–403 the chain is on the lumenal side; it reads HHQGPVPGRP…TVKYEGIEFI (342 aa). The N-linked (GlcNAc...) asparagine glycan is linked to Asn-90. Positions 170, 171, 217, 286, 347, and 398 each coordinate Ca(2+).

The protein belongs to the apyrase family. In terms of assembly, monomer. Homodimer; dimerization is Ca(2+)-dependent. Ca(2+) is required as a cofactor.

The protein localises to the endoplasmic reticulum membrane. It is found in the golgi apparatus. Its subcellular location is the golgi stack membrane. The catalysed reaction is a ribonucleoside 5'-diphosphate + H2O = a ribonucleoside 5'-phosphate + phosphate + H(+). Calcium-dependent nucleotidase with a preference for UDP. The order of activity with different substrates is UDP &gt; GDP &gt; IDP &gt;&gt; UTP &gt; CDP = GTP = ITP. Has very low activity towards ADP and even lower activity towards ATP. Does not hydrolyze AMP and GMP. Involved in proteoglycan synthesis. This is Soluble calcium-activated nucleotidase 1 (Cant1) from Mus musculus (Mouse).